Consider the following 163-residue polypeptide: Peptidyl-prolyl cis-trans isomerase-like 1 (163 aa).

In terms of domain architecture, PPIase cyclophilin-type spans 1 to 155; that stretch reads MATDVAVETT…TEVKIVKARV (155 aa).

Belongs to the cyclophilin-type PPIase family. PPIL1 subfamily.

The enzyme catalyses [protein]-peptidylproline (omega=180) = [protein]-peptidylproline (omega=0). Its function is as follows. PPIases accelerate the folding of proteins. It catalyzes the cis-trans isomerization of proline imidic peptide bonds in oligopeptides. In Neurospora crassa (strain ATCC 24698 / 74-OR23-1A / CBS 708.71 / DSM 1257 / FGSC 987), this protein is Peptidyl-prolyl cis-trans isomerase-like 1 (ppi-1).